A 666-amino-acid chain; its full sequence is Protein SLY1 (666 aa).

4 repeat units span residues K106–Q142, K220–E257, L436–E474, and K478–D514. Residues K106 to D514 form a 4 X approximate repeats region.

Belongs to the STXBP/unc-18/SEC1 family. In terms of assembly, interacts with SED5.

It is found in the cytoplasm. It localises to the membrane. Functionally, able to suppress the functional loss of YPT1. SLY1 is essential for cell viability. May interact indirectly, or directly with YPT1. This is Protein SLY1 (SLY1) from Saccharomyces cerevisiae (strain ATCC 204508 / S288c) (Baker's yeast).